We begin with the raw amino-acid sequence, 382 residues long: Dual-specificity RNA methyltransferase RlmN (382 aa).

Glu-113 functions as the Proton acceptor in the catalytic mechanism. In terms of domain architecture, Radical SAM core spans 119 to 358 (EINRATLCIS…TTIRKQRGID (240 aa)). A disulfide bridge connects residues Cys-126 and Cys-363. [4Fe-4S] cluster is bound by residues Cys-133, Cys-137, and Cys-140. S-adenosyl-L-methionine-binding positions include 187–188 (GE), Ser-219, 241–243 (SLH), and Asn-320. Catalysis depends on Cys-363, which acts as the S-methylcysteine intermediate.

The protein belongs to the radical SAM superfamily. RlmN family. The cofactor is [4Fe-4S] cluster.

Its subcellular location is the cytoplasm. It carries out the reaction adenosine(2503) in 23S rRNA + 2 reduced [2Fe-2S]-[ferredoxin] + 2 S-adenosyl-L-methionine = 2-methyladenosine(2503) in 23S rRNA + 5'-deoxyadenosine + L-methionine + 2 oxidized [2Fe-2S]-[ferredoxin] + S-adenosyl-L-homocysteine. The catalysed reaction is adenosine(37) in tRNA + 2 reduced [2Fe-2S]-[ferredoxin] + 2 S-adenosyl-L-methionine = 2-methyladenosine(37) in tRNA + 5'-deoxyadenosine + L-methionine + 2 oxidized [2Fe-2S]-[ferredoxin] + S-adenosyl-L-homocysteine. Functionally, specifically methylates position 2 of adenine 2503 in 23S rRNA and position 2 of adenine 37 in tRNAs. m2A2503 modification seems to play a crucial role in the proofreading step occurring at the peptidyl transferase center and thus would serve to optimize ribosomal fidelity. The sequence is that of Dual-specificity RNA methyltransferase RlmN from Wigglesworthia glossinidia brevipalpis.